We begin with the raw amino-acid sequence, 206 residues long: Imidazole glycerol phosphate synthase subunit HisH (206 aa).

The Glutamine amidotransferase type-1 domain occupies 1 to 206 (MIVIIDYGMG…LRILKNFGDM (206 aa)). Catalysis depends on C79, which acts as the Nucleophile. Residues H188 and E190 contribute to the active site.

In terms of assembly, heterodimer of HisH and HisF.

It is found in the cytoplasm. The enzyme catalyses 5-[(5-phospho-1-deoxy-D-ribulos-1-ylimino)methylamino]-1-(5-phospho-beta-D-ribosyl)imidazole-4-carboxamide + L-glutamine = D-erythro-1-(imidazol-4-yl)glycerol 3-phosphate + 5-amino-1-(5-phospho-beta-D-ribosyl)imidazole-4-carboxamide + L-glutamate + H(+). The catalysed reaction is L-glutamine + H2O = L-glutamate + NH4(+). The protein operates within amino-acid biosynthesis; L-histidine biosynthesis; L-histidine from 5-phospho-alpha-D-ribose 1-diphosphate: step 5/9. Functionally, IGPS catalyzes the conversion of PRFAR and glutamine to IGP, AICAR and glutamate. The HisH subunit catalyzes the hydrolysis of glutamine to glutamate and ammonia as part of the synthesis of IGP and AICAR. The resulting ammonia molecule is channeled to the active site of HisF. This chain is Imidazole glycerol phosphate synthase subunit HisH, found in Syntrophotalea carbinolica (strain DSM 2380 / NBRC 103641 / GraBd1) (Pelobacter carbinolicus).